The following is a 170-amino-acid chain: Vimentin A1 (170 aa).

The segment covering 1–10 (DLTEAANKSN) has biased composition (polar residues). The interval 1 to 20 (DLTEAANKSNEALRLAKQES) is disordered. A coil 2 region spans residues 1–111 (DLTEAANKSN…ATYRKLLEGE (111 aa)). The IF rod domain maps to 1–115 (DLTEAANKSN…KLLEGEESRI (115 aa)). Positions 112-170 (ESRISTPLPNFSSFNLRETMLELKPNIESTFTKKVLIKTIETRDGQVLNESTQNHDDLE) are tail.

It belongs to the intermediate filament family. In terms of assembly, homomer. One of the most prominent phosphoproteins in various cells of mesenchymal origin. Phosphorylation is enhanced during cell division, at which time vimentin filaments are significantly reorganized. Expressed in low amounts in retina, optic nerve, and brain and in higher amounts in spinal cord.

In terms of biological role, vimentins are class-III intermediate filaments found in various non-epithelial cells, especially mesenchymal cells. Vimentin is attached to the nucleus, endoplasmic reticulum, and mitochondria, either laterally or terminally. The chain is Vimentin A1 from Carassius auratus (Goldfish).